The sequence spans 292 residues: Coiled-coil domain-containing protein 137 (292 aa).

A compositionally biased stretch (low complexity) spans 1–16; sequence MAGLRRGAAAVAPAGT. Disordered regions lie at residues 1–94, 139–183, 205–243, and 263–292; these read MAGL…AQAA, FLSK…EKAA, PELTAKPRMSVSRDQPGKKSLMLKKLLSPGSVSQPLTTS, and ALKRLQQQRQETQSPQPPHLPPGKKPEMQL. 3 stretches are compositionally biased toward basic and acidic residues: residues 57 to 78, 155 to 164, and 173 to 183; these read KNQDEQEIPFRLREIMRSRQEM, PKKEKSERKK, and KARQRREEKAA. Residues 156–194 are a coiled coil; that stretch reads KKEKSERKKAFQKRRLDKARQRREEKAAERLEQELLQDT. Positions 222-232 are enriched in low complexity; the sequence is KKSLMLKKLLS. Phosphoserine is present on Ser-232. Residues 234–243 show a composition bias toward polar residues; it reads GSVSQPLTTS. Residues 247–276 are a coiled coil; it reads QRIVAEERERAVNAYRALKRLQQQRQETQS.

Its subcellular location is the chromosome. The polypeptide is Coiled-coil domain-containing protein 137 (CCDC137) (Bos taurus (Bovine)).